The chain runs to 329 residues: Tetraacyldisaccharide 4'-kinase (329 aa).

An ATP-binding site is contributed by 57–64; the sequence is TAGGSGKT.

This sequence belongs to the LpxK family.

It carries out the reaction a lipid A disaccharide + ATP = a lipid IVA + ADP + H(+). It participates in glycolipid biosynthesis; lipid IV(A) biosynthesis; lipid IV(A) from (3R)-3-hydroxytetradecanoyl-[acyl-carrier-protein] and UDP-N-acetyl-alpha-D-glucosamine: step 6/6. Functionally, transfers the gamma-phosphate of ATP to the 4'-position of a tetraacyldisaccharide 1-phosphate intermediate (termed DS-1-P) to form tetraacyldisaccharide 1,4'-bis-phosphate (lipid IVA). The chain is Tetraacyldisaccharide 4'-kinase from Thiobacillus denitrificans (strain ATCC 25259 / T1).